The following is a 688-amino-acid chain: Sciellin (688 aa).

The span at 1–25 shows a compositional bias: polar residues; it reads MSNVTLRKMSPTGNEMKSTTQGTTR. The segment at 1 to 29 is disordered; it reads MSNVTLRKMSPTGNEMKSTTQGTTRKQQD. N6-acetyllysine is present on lysine 83. The segment at 134 to 231 is disordered; sequence QPGGSLNANT…TNRSAERNIR (98 aa). Residues 140 to 154 show a composition bias toward low complexity; sequence NANTSNTIASTSATT. The segment covering 186–195 has biased composition (pro residues); it reads VHPPIPPKPS. Repeat copies occupy residues 251–266, 267–286, 287–306, 307–326, 327–346, 347–366, 367–386, 387–406, 407–426, 427–446, 447–465, 466–484, 485–504, 505–523, 524–543, and 544–563. A 16 X approximate tandem repeats region spans residues 251–563; it reads GEELDNLIKM…NSHVSENKNG (313 aa). Phosphoserine is present on serine 289. Positions 340–373 are disordered; it reads MNKTSRRSEDLDNATEVNPKGHENTTGKKDLDGL. The segment covering 358 to 373 has biased composition (basic and acidic residues); it reads PKGHENTTGKKDLDGL. Serine 389 carries the post-translational modification Phosphoserine. The region spanning 619–685 is the LIM zinc-binding domain; that stretch reads DMCTYCRKPL…EPCYSKIMAK (67 aa).

Highly expressed in esophagus. It is also expressed in keratinocytes, amniotic tissue, foreskin stratum spinosum and stratum granulosum, hair follicle and nail.

The protein localises to the cytoplasm. Its subcellular location is the membrane. Its function is as follows. May function in the assembly or regulation of proteins in the cornified envelope. The LIM domain may be involved in homotypic or heterotypic associations and may function to localize sciellin to the cornified envelope. This Homo sapiens (Human) protein is Sciellin (SCEL).